We begin with the raw amino-acid sequence, 433 residues long: Enolase (433 aa).

Gln-167 serves as a coordination point for (2R)-2-phosphoglycerate. Glu-209 serves as the catalytic Proton donor. The Mg(2+) site is built by Asp-246, Glu-291, and Asp-318. The (2R)-2-phosphoglycerate site is built by Lys-343, Arg-372, Ser-373, and Lys-394. The Proton acceptor role is filled by Lys-343.

This sequence belongs to the enolase family. Component of the RNA degradosome, a multiprotein complex involved in RNA processing and mRNA degradation. The cofactor is Mg(2+).

Its subcellular location is the cytoplasm. It localises to the secreted. It is found in the cell surface. It catalyses the reaction (2R)-2-phosphoglycerate = phosphoenolpyruvate + H2O. It participates in carbohydrate degradation; glycolysis; pyruvate from D-glyceraldehyde 3-phosphate: step 4/5. In terms of biological role, catalyzes the reversible conversion of 2-phosphoglycerate (2-PG) into phosphoenolpyruvate (PEP). It is essential for the degradation of carbohydrates via glycolysis. The protein is Enolase of Marinomonas sp. (strain MWYL1).